A 312-amino-acid polypeptide reads, in one-letter code: tRNA uridine(34) hydroxylase (312 aa).

The 91-residue stretch at 147–237 (SDRNVIFIDM…GILGYVHDAN (91 aa)) folds into the Rhodanese domain. The active-site Cysteine persulfide intermediate is the Cys-201.

It belongs to the TrhO family.

The catalysed reaction is uridine(34) in tRNA + AH2 + O2 = 5-hydroxyuridine(34) in tRNA + A + H2O. Functionally, catalyzes oxygen-dependent 5-hydroxyuridine (ho5U) modification at position 34 in tRNAs. This Buchnera aphidicola subsp. Schizaphis graminum (strain Sg) protein is tRNA uridine(34) hydroxylase.